The sequence spans 871 residues: Espin (871 aa).

ANK repeat units follow at residues Met1–Leu31, Leu35–Arg66, Asn69–Glu99, Ser103–Ala132, Thr137–Ala167, Asn171–Leu201, Asp205–Glu235, Asp239–Gln268, and Trp271–Val300. Phosphoserine occurs at positions 338 and 342. Disordered regions lie at residues Gln349–Pro400, Pro416–His469, Lys493–Val750, and Glu819–Tyr850. A compositionally biased stretch (polar residues) spans Ser352–Pro365. Low complexity predominate over residues Phe377–Ser395. The segment covering Pro428–Pro465 has biased composition (pro residues). A phosphoserine mark is found at Ser517, Ser524, and Ser556. The span at Gln522–Gln548 shows a compositional bias: basic and acidic residues. Over residues Leu606–Pro629 the composition is skewed to pro residues. Polar residues-rich tracts occupy residues Lys659–Asn670 and Pro685–Glu707. Ser665 is modified (phosphoserine). The region spanning Asp669–Thr686 is the WH2 domain. A phosphoserine mark is found at Ser704, Ser708, and Ser714. The stretch at Lys772 to Leu848 forms a coiled coil.

As to quaternary structure, monomer. Binds F-actin in a Ca(2+)-resistant fashion. Interacts (via N-terminus) with BAIAP2 (via SH3-domain). Interacts with PFN2. Interacts with MYO3A (via C-terminus). Interacts with MYO3B (via C-terminus). Expressed at high concentration in the microvillar parallel actin bundle (PAB) of hair cells stereocilia in the cochlea and vestibular system. Detected also at high levels of a number of other sensory cell types, including taste receptor cells, solitary chemoreceptor cells, vomeronasal sensory neurons and Merkel cells. Isoforms 2, 3, 4 and 5 are expressed in Purkinje cells dendritic spines. Expressed in utricle hair bundles (at protein level).

The protein resides in the cytoplasm. It localises to the cytoskeleton. Its subcellular location is the cell projection. It is found in the stereocilium. The protein localises to the microvillus. The protein resides in the cell junction. It localises to the dendritic spine. Its function is as follows. Multifunctional actin-bundling protein. Plays a major role in regulating the organization, dimension, dynamics and signaling capacities of the actin filament-rich microvilli in the mechanosensory and chemosensory cells. Required for the assembly and stabilization of the stereociliary parallel actin bundles. Plays a crucial role in the formation and maintenance of inner ear hair cell stereocilia. Involved in the elongation of actin in stereocilia. In extrastriolar hair cells, required for targeting MYO3B to stereocilia tips, and for regulation of stereocilia diameter and staircase formation. The chain is Espin (Espn) from Mus musculus (Mouse).